We begin with the raw amino-acid sequence, 463 residues long: Fumarate hydratase class II (463 aa).

Residues 95–97, 126–129, 136–138, and Thr184 each bind substrate; these read SGT, HPND, and SSN. The active-site Proton donor/acceptor is the His185. The active site involves Ser315. Substrate contacts are provided by residues Ser316 and 321–323; that span reads KIN.

This sequence belongs to the class-II fumarase/aspartase family. Fumarase subfamily. In terms of assembly, homotetramer.

The protein resides in the cytoplasm. The catalysed reaction is (S)-malate = fumarate + H2O. The protein operates within carbohydrate metabolism; tricarboxylic acid cycle; (S)-malate from fumarate: step 1/1. Its function is as follows. Involved in the TCA cycle. Catalyzes the stereospecific interconversion of fumarate to L-malate. This Chlamydia muridarum (strain MoPn / Nigg) protein is Fumarate hydratase class II.